Reading from the N-terminus, the 239-residue chain is Carboxy-S-adenosyl-L-methionine synthase (239 aa).

S-adenosyl-L-methionine-binding positions include Y36, 61-63, 111-112, N126, and R193; these read GCS and DI.

Belongs to the class I-like SAM-binding methyltransferase superfamily. Cx-SAM synthase family. In terms of assembly, homodimer.

It carries out the reaction prephenate + S-adenosyl-L-methionine = carboxy-S-adenosyl-L-methionine + 3-phenylpyruvate + H2O. Its function is as follows. Catalyzes the conversion of S-adenosyl-L-methionine (SAM) to carboxy-S-adenosyl-L-methionine (Cx-SAM). The chain is Carboxy-S-adenosyl-L-methionine synthase from Nitratiruptor sp. (strain SB155-2).